A 293-amino-acid chain; its full sequence is Ethanolamine ammonia-lyase small subunit (293 aa).

Residues V207 and E228 each contribute to the adenosylcob(III)alamin site.

It belongs to the EutC family. The basic unit is a heterodimer which dimerizes to form tetramers. The heterotetramers trimerize; 6 large subunits form a core ring with 6 small subunits projecting outwards. Adenosylcob(III)alamin serves as cofactor.

The protein localises to the bacterial microcompartment. It catalyses the reaction ethanolamine = acetaldehyde + NH4(+). It functions in the pathway amine and polyamine degradation; ethanolamine degradation. Catalyzes the deamination of various vicinal amino-alcohols to oxo compounds. Allows this organism to utilize ethanolamine as the sole source of nitrogen and carbon in the presence of external vitamin B12. This Listeria monocytogenes serovar 1/2a (strain ATCC BAA-679 / EGD-e) protein is Ethanolamine ammonia-lyase small subunit.